The chain runs to 934 residues: Palmitoyltransferase ZDHHC8 (934 aa).

Residues 1–9 (MPKCDVKTR) lie on the Cytoplasmic side of the membrane. A helical transmembrane segment spans residues 10–30 (YIPATFAWIVLLLTTFLFFFY). The Extracellular segment spans residues 31–47 (PCQFYVKSHPWVLAYQG). A helical transmembrane segment spans residues 48–68 (VITFFVLANFTLATFMDPGII). Over 69–142 (PKASPDEDCE…NNCIGRRNYR (74 aa)) the chain is Cytoplasmic. Residues 99–149 (KWCVTCKFYRPPRCSHCSVCNHCIETFDHHCPWVNNCIGRRNYRFFFFFLV) form the DHHC domain. C129 functions as the S-palmitoyl cysteine intermediate in the catalytic mechanism. The helical transmembrane segment at 143–163 (FFFFFLVSLSIHMLSIFSLCL) threads the bilayer. The Extracellular portion of the chain corresponds to 164–177 (VYVLKIMPNIKDTA). A helical membrane pass occupies residues 178 to 198 (PIVAIILMGLVTILAIPIFGL). The Cytoplasmic segment spans residues 199–934 (TGFHMVLVSR…IYDMNYEISV (736 aa)). Disordered regions lie at residues 336 to 440 (NGYN…GYTS), 506 to 525 (MASPVRRSNPGTPTQPRRPD), 669 to 705 (QRGVYMWKDTSPGFTNNAGQQQQQQQQAQQVVSSGIG), 751 to 780 (QQQQQQQQAAAAAAASYHRSNPTSPTTMPQ), 835 to 862 (PNPMGNQGGGNLQTQPSPQIKRKQTPTR), and 881 to 934 (LEQQ…EISV). Polar residues-rich tracts occupy residues 337–349 (GYNQRSGSTTLYS) and 381–394 (RHNSSSFYLPQVSD). Residues 397–411 (GLNGSVSTGGGGGGD) show a composition bias toward gly residues. Basic residues predominate over residues 415-429 (HMRLYHPRHSPHARP). Low complexity-rich tracts occupy residues 688 to 705 (QQQQQQQQAQQVVSSGIG) and 751 to 765 (QQQQQQQQAAAAAAA). A compositionally biased stretch (polar residues) spans 768–780 (HRSNPTSPTTMPQ). Residues 910-919 (MQSNASNSGT) are compositionally biased toward polar residues.

The protein belongs to the DHHC palmitoyltransferase family. ERF2/ZDHHC9 subfamily.

The protein localises to the golgi apparatus membrane. The protein resides in the cell membrane. It carries out the reaction L-cysteinyl-[protein] + hexadecanoyl-CoA = S-hexadecanoyl-L-cysteinyl-[protein] + CoA. Its function is as follows. Palmitoyltransferase that catalyzes the addition of palmitate onto various protein substrates and therefore functions in several unrelated biological processes. Regulates tissue growth possibly by regulating Ras64B protein stability. May regulate CG34450 mRNA levels. The polypeptide is Palmitoyltransferase ZDHHC8 (Drosophila melanogaster (Fruit fly)).